A 49-amino-acid polypeptide reads, in one-letter code: Delta-actitoxin-Axm1b (49 aa).

The well-structured region stretch occupies residues 1–7; it reads GVPCLCD. 3 disulfides stabilise this stretch: Cys-4-Cys-46, Cys-6-Cys-36, and Cys-29-Cys-47. The interval 8 to 17 is arg-14 loop (non-well-structured region); the sequence is SDGPRPRGNT. The tract at residues 18 to 49 is well-structured region; sequence LSGILWFYPSGCPSGWHNCKAHGPNIGWCCKK.

The protein belongs to the sea anemone sodium channel inhibitory toxin family. Type I subfamily.

It is found in the secreted. The protein localises to the nematocyst. In terms of biological role, binds specifically to voltage-gated sodium channels (Nav) (site 3), thereby delaying their inactivation. This toxin has the highest affinity of all anemone toxins for the mammalian sodium channel, whereas its paralog Anthopleurin-A retains the greatest capacity to discriminate between cardiac (Nav1.5/SCN5A) and neuronal sodium channels. When tested electrophysiologically, this toxin exhibits a high affinity for multiple sodium channels with a 50-fold preference for rat cardiac (Nav1.5/SCN5A) over neuronal channels (0.1 nM versus 5 nM). When tested by ion flux, the affinities are similar and appear to have higher affinity (9 nM versus 22 nM). The residue Lys-37 of this toxin has been shown to interact with channel Nav1.5 (residue Asp-1612 in rat and Asp-1610 in human), which is located in the DIV S3-S4 linker (corresponding to channel site 3). Selectively modifies sodium channel inactivation from the open state with little effect on channel activation or on inactivation from closed states. Does not display phospholipid-binding activities, suggesting that the domain IV S3-S4 linker is located at the extracellular surface and not buried in the phospholipid bilayer. The chain is Delta-actitoxin-Axm1b from Anthopleura xanthogrammica (Giant green sea anemone).